Reading from the N-terminus, the 604-residue chain is Terpenoid synthase 30 (604 aa).

5 residues coordinate Mg(2+): Asn356, Asp360, Asn500, Thr504, and Glu508. Residues Asn356 to Asp360 carry the DDXXD motif; degenerate motif.

This sequence belongs to the terpene synthase family. Tpsa subfamily. It depends on Mg(2+) as a cofactor. Requires Mn(2+) as cofactor.

It localises to the cytoplasm. Its pathway is secondary metabolite biosynthesis; terpenoid biosynthesis. Involved in terpene biosynthesis in roots. Possesses sesquiterpene (C15) synthase activity and diterpene (C20) synthase activity in vitro. This chain is Terpenoid synthase 30, found in Arabidopsis thaliana (Mouse-ear cress).